Here is a 298-residue protein sequence, read N- to C-terminus: GTPase Era (298 aa).

The region spanning 4–171 is the Era-type G domain; sequence KSGFVSVIGR…LKEALDYIPE (168 aa). The G1 stretch occupies residues 12 to 19; that stretch reads GRPNVGKS. 12-19 is a GTP binding site; the sequence is GRPNVGKS. The segment at 38–42 is G2; that stretch reads QTTRN. Positions 59–62 are G3; that stretch reads DTPG. GTP is bound by residues 59–63 and 121–124; these read DTPGI and NKVD. Residues 121 to 124 are G4; it reads NKVD. Positions 150–152 are G5; sequence ISA. The 78-residue stretch at 202–279 folds into the KH type-2 domain; sequence LDDEVPHGVG…FLELWVKVKP (78 aa).

The protein belongs to the TRAFAC class TrmE-Era-EngA-EngB-Septin-like GTPase superfamily. Era GTPase family. As to quaternary structure, monomer.

It localises to the cytoplasm. Its subcellular location is the cell membrane. In terms of biological role, an essential GTPase that binds both GDP and GTP, with rapid nucleotide exchange. Plays a role in 16S rRNA processing and 30S ribosomal subunit biogenesis and possibly also in cell cycle regulation and energy metabolism. The chain is GTPase Era from Ruminiclostridium cellulolyticum (strain ATCC 35319 / DSM 5812 / JCM 6584 / H10) (Clostridium cellulolyticum).